A 213-amino-acid polypeptide reads, in one-letter code: Ras-related protein Rab-25 (213 aa).

Residues Ser21, Gly24, Lys25, Thr26, Asn27, Ser38, His39, Thr43, and Thr44 each coordinate GTP. A Mg(2+)-binding site is contributed by Thr26. 2 short sequence motifs (switch) span residues Asn35 to Phe49 and Asp67 to Gly84. Positions 44 and 67 each coordinate Mg(2+). Residues Gly70, Asn125, Lys126, Asp128, Ala156, and Leu157 each coordinate GTP. 2 S-geranylgeranyl cysteine lipidation sites follow: Cys209 and Cys210. A Cysteine methyl ester modification is found at Cys210. A propeptide spans Ile211 to Leu213 (removed in mature form).

It belongs to the small GTPase superfamily. Rab family. Interacts (GTP-bound form) with RAB11FIP1, RAB11FIP2, RAB11FIP3 and RAB11FIP4. Interacts (via the hypervariable C-terminal region) with ITGB1 (via the cytoplasmic region); the interaction is GTP-dependent. Interacts with ITGAV. Associates with the integrin alpha-V/beta-1 heterodimer. Interacts with VPS33B. Mg(2+) is required as a cofactor.

The protein localises to the cell membrane. The protein resides in the cell projection. Its subcellular location is the pseudopodium membrane. It localises to the cytoplasmic vesicle. The enzyme catalyses GTP + H2O = GDP + phosphate + H(+). With respect to regulation, regulated by guanine nucleotide exchange factors (GEFs) which promote the exchange of bound GDP for free GTP. Regulated by GTPase activating proteins (GAPs) which increase the GTP hydrolysis activity. Inhibited by GDP dissociation inhibitors (GDIs) which prevent Rab-GDP dissociation. Its function is as follows. The small GTPases Rab are key regulators of intracellular membrane trafficking, from the formation of transport vesicles to their fusion with membranes. Rabs cycle between an inactive GDP-bound form and an active GTP-bound form that is able to recruit to membranes different set of downstream effectors directly responsible for vesicle formation, movement, tethering and fusion. RAB25 regulates epithelial cell differentiation, proliferation and survival, thereby playing key roles in tumorigenesis. Promotes invasive migration of cells in which it functions to localize and maintain integrin alpha-V/beta-1 at the tips of extending pseudopodia. Involved in the regulation of epithelial morphogenesis through the control of CLDN4 expression and localization at tight junctions. May selectively regulate the apical recycling pathway. Together with MYO5B regulates transcytosis. This is Ras-related protein Rab-25 (RAB25) from Canis lupus familiaris (Dog).